The primary structure comprises 323 residues: tRNA (guanine(9)-N1)-methyltransferase (323 aa).

Residues 1–16 (MTEQTSEATVVNNSPA) are compositionally biased toward polar residues. Disordered regions lie at residues 1-34 (MTEQTSEATVVNNSPAPTIPKIKREKPTPEEIEE) and 192-215 (TGAPNSESKDNDGNSNSNTTNSTD). Residues 25 to 34 (EKPTPEEIEE) are compositionally biased toward basic and acidic residues. Positions 99–319 (KAQPIPSRQI…KVLPPRKIKS (221 aa)) constitute an SAM-dependent MTase TRM10-type domain. Residues 204–215 (GNSNSNTTNSTD) show a composition bias toward low complexity. Residues 225 to 226 (LT), glycine 245, 249 to 253 (DKNRH), cysteine 257, leucine 271, and 283 to 285 (HVL) contribute to the S-adenosyl-L-methionine site. The active-site Proton acceptor is aspartate 249.

Belongs to the class IV-like SAM-binding methyltransferase superfamily. TRM10 family. Monomer.

The protein resides in the cytoplasm. Its subcellular location is the nucleus. The enzyme catalyses guanosine(9) in tRNA + S-adenosyl-L-methionine = N(1)-methylguanosine(9) in tRNA + S-adenosyl-L-homocysteine + H(+). In terms of biological role, S-adenosyl-L-methionine-dependent guanine N(1)-methyltransferase that catalyzes the formation of N(1)-methylguanine at position 9 (m1G9) in cytoplasmic tRNA. The protein is tRNA (guanine(9)-N1)-methyltransferase of Candida albicans (strain SC5314 / ATCC MYA-2876) (Yeast).